The following is a 340-amino-acid chain: 4-amino-5-hydroxymethyl-2-methylpyrimidine phosphate synthase THI11 (340 aa).

Residue lysine 62 is modified to N6-(pyridoxal phosphate)lysine. Residue histidine 66 is part of the active site. Position 115–118 (glycine 115–glycine 118) interacts with pyridoxal 5'-phosphate. The short motif at cysteine 195 to cysteine 199 is the CCCFC; essential for catalytic activity, may be the site of iron coordination element.

This sequence belongs to the NMT1/THI5 family. Homodimer. Fe cation serves as cofactor.

The enzyme catalyses N(6)-(pyridoxal phosphate)-L-lysyl-[4-amino-5-hydroxymethyl-2-methylpyrimidine phosphate synthase] + L-histidyl-[4-amino-5-hydroxymethyl-2-methylpyrimidine phosphate synthase] + 2 Fe(3+) + 4 H2O = L-lysyl-[4-amino-5-hydroxymethyl-2-methylpyrimidine phosphate synthase] + (2S)-2-amino-5-hydroxy-4-oxopentanoyl-[4-amino-5-hydroxymethyl-2-methylpyrimidine phosphate synthase] + 4-amino-2-methyl-5-(phosphooxymethyl)pyrimidine + 3-oxopropanoate + 2 Fe(2+) + 2 H(+). The protein operates within cofactor biosynthesis; thiamine diphosphate biosynthesis. In terms of biological role, responsible for the formation of the pyrimidine heterocycle in the thiamine biosynthesis pathway. Catalyzes the formation of hydroxymethylpyrimidine phosphate (HMP-P) from histidine and pyridoxal phosphate (PLP). The protein uses PLP and the active site histidine to form HMP-P, generating an inactive enzyme. The enzyme can only undergo a single turnover, which suggests it is a suicide enzyme. In Saccharomyces cerevisiae (strain ATCC 204508 / S288c) (Baker's yeast), this protein is 4-amino-5-hydroxymethyl-2-methylpyrimidine phosphate synthase THI11.